The following is a 139-amino-acid chain: ATP synthase epsilon chain (139 aa).

The protein belongs to the ATPase epsilon chain family. In terms of assembly, F-type ATPases have 2 components, CF(1) - the catalytic core - and CF(0) - the membrane proton channel. CF(1) has five subunits: alpha(3), beta(3), gamma(1), delta(1), epsilon(1). CF(0) has three main subunits: a, b and c.

Its subcellular location is the cell inner membrane. Its function is as follows. Produces ATP from ADP in the presence of a proton gradient across the membrane. The protein is ATP synthase epsilon chain of Shigella boydii serotype 18 (strain CDC 3083-94 / BS512).